The sequence spans 335 residues: Partner of xrn-2 protein 1 (335 aa).

The XRN2-binding (XTBD) domain occupies 7–91 (VEAEKKLWES…SYVKASAAKK (85 aa)). The segment at 95–119 (VKTSDLEGASDESKKVKMEKSPSPV) is disordered. Residues 105 to 114 (DESKKVKMEK) show a composition bias toward basic and acidic residues.

Interacts (via N-terminus) with xrn-2; the interaction is direct.

The protein resides in the nucleus. The protein localises to the nucleolus. Its subcellular location is the nucleoplasm. Functionally, plays a role in maintenance of steady-state concentration and turnover of microRNAs (miRNA) by degradation of mature miRNA in complex with the exoribonuclease xrn-2. Stabilizes and enhances the accumulation and activity of the exoribonuclease xrn-2, and thus contributes to miRNA turnover. This is Partner of xrn-2 protein 1 from Caenorhabditis elegans.